A 77-amino-acid polypeptide reads, in one-letter code: MSRTIYLSTPSGAGDHLLESLFKEAKKEERKDRRLAVSIRLEDLAVHITNSDMTGKEAAELLRREATRFENESQELH.

This is an uncharacterized protein from Escherichia phage 186 (Bacteriophage 186).